The primary structure comprises 386 residues: 1-deoxy-D-xylulose 5-phosphate reductoisomerase (386 aa).

NADPH contacts are provided by threonine 13, glycine 14, serine 15, isoleucine 16, asparagine 40, and asparagine 122. Lysine 123 is a binding site for 1-deoxy-D-xylulose 5-phosphate. Glutamate 124 is an NADPH binding site. Aspartate 148 is a binding site for Mn(2+). Positions 149, 150, 177, and 201 each coordinate 1-deoxy-D-xylulose 5-phosphate. Glutamate 150 lines the Mn(2+) pocket. Glycine 207 contributes to the NADPH binding site. 1-deoxy-D-xylulose 5-phosphate-binding residues include serine 214, asparagine 219, lysine 220, and glutamate 223. A Mn(2+)-binding site is contributed by glutamate 223.

Belongs to the DXR family. Mg(2+) serves as cofactor. The cofactor is Mn(2+).

It carries out the reaction 2-C-methyl-D-erythritol 4-phosphate + NADP(+) = 1-deoxy-D-xylulose 5-phosphate + NADPH + H(+). Its pathway is isoprenoid biosynthesis; isopentenyl diphosphate biosynthesis via DXP pathway; isopentenyl diphosphate from 1-deoxy-D-xylulose 5-phosphate: step 1/6. In terms of biological role, catalyzes the NADPH-dependent rearrangement and reduction of 1-deoxy-D-xylulose-5-phosphate (DXP) to 2-C-methyl-D-erythritol 4-phosphate (MEP). This chain is 1-deoxy-D-xylulose 5-phosphate reductoisomerase, found in Francisella tularensis subsp. holarctica (strain OSU18).